A 772-amino-acid chain; its full sequence is General transcription and DNA repair factor IIH helicase subunit XPD (772 aa).

The 277-residue stretch at 7 to 283 (DLPILFPYPR…QSDSKKLQDE (277 aa)) folds into the Helicase ATP-binding domain. Position 42–49 (42–49 (MPSGTGKT)) interacts with ATP. C115, C133, C154, and C189 together coordinate [4Fe-4S] cluster. Residues 233-236 (DEAH) carry the DEAH box motif.

Belongs to the helicase family. RAD3/XPD subfamily. As to quaternary structure, component of the 7-subunit TFIIH core complex composed of XPB/ptr8, XPD/rad15, ssl1, tfb1, tfb2, tfb4 and tfb5, which is active in NER. The core complex associates with the 3-subunit CTD-kinase module TFIIK composed of mcs2/cyclin H, mcs6/cdk7 and pmh1/tfb3 to form the 10-subunit holoenzyme (holo-TFIIH) active in transcription. [4Fe-4S] cluster is required as a cofactor.

It localises to the nucleus. It catalyses the reaction Couples ATP hydrolysis with the unwinding of duplex DNA at the replication fork by translocating in the 5'-3' direction. This creates two antiparallel DNA single strands (ssDNA). The leading ssDNA polymer is the template for DNA polymerase III holoenzyme which synthesizes a continuous strand.. The catalysed reaction is ATP + H2O = ADP + phosphate + H(+). Functionally, ATP-dependent 5'-3' DNA helicase, component of the general transcription and DNA repair factor IIH (TFIIH) core complex, which is involved in general and transcription-coupled nucleotide excision repair (NER) of damaged DNA and, when complexed to TFIIK, in RNA transcription by RNA polymerase II. In NER, TFIIH acts by opening DNA around the lesion to allow the excision of the damaged oligonucleotide and its replacement by a new DNA fragment. The ATP-dependent helicase activity of XPD/rad15 is required for DNA opening. In transcription, TFIIH has an essential role in transcription initiation. When the pre-initiation complex (PIC) has been established, TFIIH is required for promoter opening and promoter escape. Phosphorylation of the C-terminal tail (CTD) of the largest subunit of RNA polymerase II by the kinase module TFIIK controls the initiation of transcription. XPD/rad15 acts by forming a bridge between TFIIK and the core-TFIIH complex. Involved in the maintenance of the fidelity of DNA replication. This is General transcription and DNA repair factor IIH helicase subunit XPD from Schizosaccharomyces pombe (strain 972 / ATCC 24843) (Fission yeast).